A 612-amino-acid polypeptide reads, in one-letter code: 1,8-cineole synthase, chloroplastic (612 aa).

The transit peptide at 1-52 (MALVSGAPLASRSCLNKSLISSTHELKPLRRTILPTLRWKSATPSINMCLTT) directs the protein to the chloroplast. Aspartate 363, aspartate 367, and aspartate 515 together coordinate Mg(2+). Positions 363 to 367 (DDIYD) match the DDXXD motif motif.

It belongs to the terpene synthase family. Tpsd subfamily. Requires Mg(2+) as cofactor. Mn(2+) is required as a cofactor.

The protein localises to the plastid. It is found in the chloroplast. The enzyme catalyses (2E)-geranyl diphosphate + H2O = 1,8-cineole + diphosphate. It functions in the pathway terpene metabolism; oleoresin biosynthesis. Functionally, terpene synthase (TPS) involved in the biosynthesis of monoterpene natural products included in conifer oleoresin secretions and volatile emissions; these compounds contribute to biotic and abiotic stress defense against herbivores and pathogens. Catalyzes the conversion of (2E)-geranyl diphosphate (GPP) to 1,8-cineole. The protein is 1,8-cineole synthase, chloroplastic of Picea engelmannii x Picea glauca (Hybrid white spruce).